Consider the following 142-residue polypeptide: ATP synthase epsilon chain (142 aa).

The protein belongs to the ATPase epsilon chain family. As to quaternary structure, F-type ATPases have 2 components, CF(1) - the catalytic core - and CF(0) - the membrane proton channel. CF(1) has five subunits: alpha(3), beta(3), gamma(1), delta(1), epsilon(1). CF(0) has three main subunits: a, b and c.

The protein resides in the cell inner membrane. Its function is as follows. Produces ATP from ADP in the presence of a proton gradient across the membrane. The protein is ATP synthase epsilon chain of Coxiella burnetii (strain CbuK_Q154) (Coxiella burnetii (strain Q154)).